The primary structure comprises 165 residues: Lipoprotein signal peptidase (165 aa).

Helical transmembrane passes span 7 to 27, 46 to 66, 72 to 92, and 100 to 120; these read YFSS…LVLL, AVTS…FSFL, WQRY…IYLL, and LFCW…IDRV. Catalysis depends on residues aspartate 127 and aspartate 145. Residues 136–156 traverse the membrane as a helical segment; it reads WHWPAFNIADSAICIGAVLFI.

The protein belongs to the peptidase A8 family.

It is found in the cell inner membrane. It catalyses the reaction Release of signal peptides from bacterial membrane prolipoproteins. Hydrolyzes -Xaa-Yaa-Zaa-|-(S,diacylglyceryl)Cys-, in which Xaa is hydrophobic (preferably Leu), and Yaa (Ala or Ser) and Zaa (Gly or Ala) have small, neutral side chains.. Its pathway is protein modification; lipoprotein biosynthesis (signal peptide cleavage). Functionally, this protein specifically catalyzes the removal of signal peptides from prolipoproteins. The protein is Lipoprotein signal peptidase of Janthinobacterium sp. (strain Marseille) (Minibacterium massiliensis).